The sequence spans 191 residues: MSRDTTTPDDAAAFEAAATTSGTATSAGENIPGDLLPLCREHICPVCPEKAQADEQRLRALADLENTKKRLQREKDEQVRYAAETVLADLLPTLDNLDLALQYGQGSAECRNMLVGVEMTRKLLLEALGRHGLEAVGEAGEPFTPELHEAMSHEDRGDMPADHVATVMMKGYRLKERLLRPAKVTVSRTPG.

The protein belongs to the GrpE family. Homodimer.

The protein localises to the cytoplasm. In terms of biological role, participates actively in the response to hyperosmotic and heat shock by preventing the aggregation of stress-denatured proteins, in association with DnaK and GrpE. It is the nucleotide exchange factor for DnaK and may function as a thermosensor. Unfolded proteins bind initially to DnaJ; upon interaction with the DnaJ-bound protein, DnaK hydrolyzes its bound ATP, resulting in the formation of a stable complex. GrpE releases ADP from DnaK; ATP binding to DnaK triggers the release of the substrate protein, thus completing the reaction cycle. Several rounds of ATP-dependent interactions between DnaJ, DnaK and GrpE are required for fully efficient folding. In Nitratidesulfovibrio vulgaris (strain ATCC 29579 / DSM 644 / CCUG 34227 / NCIMB 8303 / VKM B-1760 / Hildenborough) (Desulfovibrio vulgaris), this protein is Protein GrpE.